Consider the following 512-residue polypeptide: mRNA export factor (512 aa).

Positions 1–15 (MATDIDMLIDLGLDL) are enriched in low complexity. A disordered region spans residues 1–243 (MATDIDMLID…APERKAPAAD (243 aa)). The Nuclear export signal signature appears at 5-17 (IDMLIDLGLDLSD). Ser16 and Ser18 each carry phosphoserine; by host. Composition is skewed to acidic residues over residues 16 to 26 (SDSDLDEDPPE) and 35 to 51 (LESD…EDME). The interaction with host ALYREF stretch occupies residues 104 to 112 (VWSRLGARR). Residues 110 to 138 (ARRPSCSPEQHGGKVARLQPPPTKAQPAR) carry the Nuclear localization signal motif. Ser114 is subject to Phosphoserine; by host. At Arg138 the chain carries Dimethylated arginine; by host. The tract at residues 138–152 (RGGRRGRRRGRGRGG) is RGG-box. Positions 139-149 (GGRRGRRRGRG) are enriched in basic residues. Residue Arg148 is modified to Omega-N-methylarginine; by host. Position 150 is a dimethylated arginine; by host (Arg150). The span at 214–233 (APPPLMTLAIAPPPADPRAP) shows a compositional bias: pro residues. Zn(2+)-binding residues include Cys400, His479, Cys483, and Cys488. The CHC2-type zinc-finger motif lies at 400 to 488 (CYLKARGLCG…HRQECSSRVC (89 aa)). The interval 500-512 (YVHGKYFYCNSLF) is important for homodimerization.

Belongs to the HHV-1 ICP27 protein family. As to quaternary structure, homodimer. Interacts with host RBP1; this interaction facilitates the RNA polymerase recruitment to viral transcription sites. Interacts (via the RGG box) with host ALYREF/THOC4; this interaction recruits ALYREF to viral replication compartments and probably directs viral mRNA to the TAP/NFX1 pathway. Interacts with host ALYREF2. Interacts (via the RGG box) with host SRPK1; this interaction relocalizes SRPK1 to the nucleus and seems to alter its activity. Interacts with ICP4; this interaction modulates ICP4 DNA-binding activity. Interacts with host NXF1; this interaction allows efficient export of HHV-1 early and late transcripts. Methylated within the RGG box possibly by host PRMT1. When hypomethylated, ICP27 is exported to the cytoplasm earlier and more rapidly. Post-translationally, phosphorylated.

It localises to the host cytoplasm. It is found in the host nucleus. Its function is as follows. Multifunctional regulator of the expression of viral genes that contributes to the shutoff of host protein synthesis and mediates nuclear export of viral intronless mRNAs. Early in infection, this immediate early (EI) protein mediates the inhibition of cellular splicing. This results in the accumulation of unprocessed 3'end pre-mRNAs which can't be exported from the nucleus. Cellular protein synthesis is thereby shut off early after virus infection. Later in the infection, it helps recruit cellular RNA polymerase II to viral replication sites and promotes the nuclear export of viral intronless mRNAs by interacting with mRNAs and host NXF1/TAP. ICP27 binds to NUP62 which may provide facilitated viral mRNA export and may indirectly compete with some host cell transport receptors for binding and inhibit cellular nucleocytoplasmic transport pathways. Also stimulates translation of viral transcripts. Repression of host gene expression blocks the cell cycle at the G1 phase and prevents apoptosis. Seems to silence the 3' splice site of the promyelocytic leukemia (PML) intron 7a, thereby switching PML isoforms from PML-II to PML-V. This could be linked to the accelerated mRNA export induced by ICP27 which might not provide sufficient time for PML pre-mRNA to be spliced in the nucleus. This Homo sapiens (Human) protein is mRNA export factor.